The following is a 299-amino-acid chain: ATP phosphoribosyltransferase (299 aa).

The protein belongs to the ATP phosphoribosyltransferase family. Long subfamily. Mg(2+) is required as a cofactor.

The protein localises to the cytoplasm. The catalysed reaction is 1-(5-phospho-beta-D-ribosyl)-ATP + diphosphate = 5-phospho-alpha-D-ribose 1-diphosphate + ATP. It functions in the pathway amino-acid biosynthesis; L-histidine biosynthesis; L-histidine from 5-phospho-alpha-D-ribose 1-diphosphate: step 1/9. With respect to regulation, feedback inhibited by histidine. Catalyzes the condensation of ATP and 5-phosphoribose 1-diphosphate to form N'-(5'-phosphoribosyl)-ATP (PR-ATP). Has a crucial role in the pathway because the rate of histidine biosynthesis seems to be controlled primarily by regulation of HisG enzymatic activity. This Shewanella loihica (strain ATCC BAA-1088 / PV-4) protein is ATP phosphoribosyltransferase.